An 835-amino-acid chain; its full sequence is Protein VP3 (835 aa).

The tract at residues 171 to 245 (KKIKERMTTS…KDTIKLKQER (75 aa)) is N7-methyltransferase activity. Residues 246 to 428 (WLGKRLSQFD…KNIKRFIPKG (183 aa)) form a 2'-O-methyltransferase activity region. An N7-methyltransferase activity region spans residues 429 to 555 (VLYSYINNII…NHLFMLSGTN (127 aa)). A GTase/RTPase activity region spans residues 556–692 (KYFNMDQFAN…NYINKVYSIT (137 aa)). Positions 693–835 (YADDPNYFIG…KGDTVFDMAE (143 aa)) are 2'-5'-phosphodiesterase activity. Active-site for 2'-5'-phosphodiesterase activity residues include His-718, Thr-720, His-797, and Thr-799.

It belongs to the rotavirus VP3 family. Interacts with VP1. Interacts with VP2.

It localises to the virion. It carries out the reaction a 5'-end diphospho-ribonucleoside in mRNA + GTP + H(+) = a 5'-end (5'-triphosphoguanosine)-ribonucleoside in mRNA + diphosphate. The catalysed reaction is a 5'-end (5'-triphosphoguanosine)-ribonucleoside in mRNA + S-adenosyl-L-methionine = a 5'-end (N(7)-methyl 5'-triphosphoguanosine)-ribonucleoside in mRNA + S-adenosyl-L-homocysteine. The enzyme catalyses 5'-triphosphoadenylyl-(2'-&gt;5')-adenylyl-(2'-&gt;5')-adenosine + 2 H2O = 2 AMP + ATP + 2 H(+). In terms of biological role, multifunctional enzyme involved in mRNA capping. Catalyzes the formation of the 5' cap structure on the viral plus-strand transcripts. Specifically binds to GTP and displays guanylyltransferase and methyltransferase activities. Has affinity for ssRNA but not for dsRNA. Capping activity is non-specific and caps RNAs that initiate with either a G or an A residue. Together with VP1 polymerase, forms a VP1-VP3 complex positioned near the channels situated at each of the five-fold vertices of the core. Following infection, the outermost layer of the virus is lost, leaving a double-layered particle (DLP) made up of the core and VP6 shell. VP1 then catalyzes the transcription of fully conservative plus-strand genomic RNAs that are capped by VP3 and extruded through the DLP's channels into the cytoplasm where they function as mRNAs for translation of viral proteins. DLPs probably have an RNA triphosphatase activity as well, whereas open cores do not. Its function is as follows. Counteracts the host innate immune response thanks to its phosphodiesterase that degrades the 5'-triphosphorylated, 2'-5' linked adenylate oligomers produced by the host cell IFN-inducible 2',5'-oligoadenylate synthetase (OAS). The host RNaseL is therefore not activated. The chain is Protein VP3 from Rotavirus A (strain RVA/Cow/United Kingdom/UK/1975/G6P7[5]) (RV-A).